A 997-amino-acid polypeptide reads, in one-letter code: Protein argonaute 5 (997 aa).

2 stretches are compositionally biased toward gly residues: residues 1–16 (MSNRGGGGHGGASRGR) and 43–59 (GGRGGSVSAGRGRGNVG). A disordered region spans residues 1 to 144 (MSNRGGGGHG…TSLPPASSKA (144 aa)). Residues 93–106 (SVASSSKTVSVASS) are compositionally biased toward low complexity. Over residues 116–129 (VSETMSNLQITSTE) the composition is skewed to polar residues. In terms of domain architecture, PAZ spans 360–471 (VVTDFISKFL…LPMELCQIDE (112 aa)). Residues 638-958 (LLIVILPDVT…AAFRARYYME (321 aa)) form the Piwi domain. Asp-721 and Asp-807 together coordinate a divalent metal cation. Interaction with guide RNA regions lie at residues 847–848 (KR), 893–901 (HAGIQGTSR), and 930–952 (YARCTKSVSIVPPAYYAHLAAFR). A divalent metal cation is bound at residue His-947.

Belongs to the argonaute family. Ago subfamily. Mg(2+) is required as a cofactor. It depends on Mn(2+) as a cofactor.

Involved in RNA-mediated post-transcriptional gene silencing (PTGS). Main component of the RNA-induced silencing complex (RISC) that binds to a short guide RNA such as a microRNA (miRNA) or small interfering RNA (siRNA). RISC uses the mature miRNA or siRNA as a guide for slicer-directed cleavage of homologous mRNAs to repress gene expression. Associates with siRNAs of various sizes, from 21-24 nucleotide in length and preferentially recruits small RNAs with a 5' terminal cytosine. Probably involved in antiviral RNA silencing. Associates with siRNAs derived from cucumber mosaic virus (CMV). Targeted by the turnip yellows virus (TuYV) protein P0 (via F-box-like domain) for probable proteasome degradation and thereby inactivating AGO5 function in RNA silencing. This chain is Protein argonaute 5 (AGO5), found in Arabidopsis thaliana (Mouse-ear cress).